The sequence spans 213 residues: UPF0502 protein Daro_2469 (213 aa).

Belongs to the UPF0502 family.

This is UPF0502 protein Daro_2469 from Dechloromonas aromatica (strain RCB).